A 147-amino-acid polypeptide reads, in one-letter code: MAKEIVRKAKLQFPAGQAKPGPALAGVGINMPEFTKAFNDQTRDRGQEPVPVLITVYKDKSFEFKLFTSPTAYKLTQIAKIKKGSSKANKEKVATITLDQLKEIAEYKLPDLNTNNIDSAMRQIAGTAKQMGIEIEGYAEWLKKGTN.

Belongs to the universal ribosomal protein uL11 family. In terms of assembly, part of the ribosomal stalk of the 50S ribosomal subunit. Interacts with L10 and the large rRNA to form the base of the stalk. L10 forms an elongated spine to which L12 dimers bind in a sequential fashion forming a multimeric L10(L12)X complex. One or more lysine residues are methylated.

Functionally, forms part of the ribosomal stalk which helps the ribosome interact with GTP-bound translation factors. In Metamycoplasma arthritidis (strain 158L3-1) (Mycoplasma arthritidis), this protein is Large ribosomal subunit protein uL11.